The chain runs to 1171 residues: Protein WWC2 (1171 aa).

WW domains follow at residues 9–42 and 56–89; these read LPLP…DPRD and NELP…DPRK. 3 coiled-coil regions span residues 120-193, 223-257, and 301-420; these read KEQR…YKEQ, ELKS…LEEA, and LAEK…KSAT. Disordered regions lie at residues 521–552 and 603–637; these read SPTA…LSPP and QALA…KNPD. Over residues 534–551 the composition is skewed to low complexity; sequence PKSVTSLSSLSSLSSLSP. Basic and acidic residues-rich tracts occupy residues 606-616 and 625-637; these read AERKSTGEGLR and GRTD…KNPD. In terms of domain architecture, C2 spans 684 to 806; it reads GAAQAQLILR…FSNDVHTQWY (123 aa). Coiled coils occupy residues 836–870 and 1047–1123; these read LDLD…EQLC and DLEL…NAEK.

This sequence belongs to the WWC family.

The protein resides in the cytoplasm. The protein localises to the cytosol. Its function is as follows. Negative regulator of the Hippo signaling pathway, also known as the Salvador-Warts-Hippo (SWH) pathway. The polypeptide is Protein WWC2 (wwc2) (Xenopus tropicalis (Western clawed frog)).